Consider the following 517-residue polypeptide: Cytochrome P450 monooxygenase calE (517 aa).

A glycan (N-linked (GlcNAc...) asparagine) is linked at Asn8. Residues 14 to 34 (SLMHHYILIAILVASIIAMVV) form a helical membrane-spanning segment. Cys458 contributes to the heme binding site.

This sequence belongs to the cytochrome P450 family. The cofactor is heme.

It localises to the membrane. It functions in the pathway secondary metabolite biosynthesis. Functionally, cytochrome P450 monooxygenase; part of the gene cluster that mediates the biosynthesis of calbistrin A and related compounds. Calbistrin A is a secondary metabolite with an interesting structure that was recently found to have bioactivity against leukemia cells. It consists of two polyketides linked by an ester bond: a bicyclic decalin containing polyketide and a linear 12 carbon dioic acid structure. The polyketide synthase calA is probably responsible for forming the decalin moiety. Because calA lacks a designated enoylreductase (ER) domain, the required activity is provided by the trans-enoyl reductase calK. Following release from the PKS, calF then probably catalyzes the oxidation and the subsequent Diels Alder cycloisomerization that lead to the formation of the decalin moiety. The decalin polyketide backbone includes two C-methyl groups, at C7 and C11 in backbone, of which the C7 position is probably methylated by the methyltransferase domain of calA. A candidate for adding the methyl group at C11, if not done by CalA, is the cluster methyltransferase calH. Several additional tailoring enzymes within the cluster could be involved in the modification of the decalin polyketide product. Those include the 3 cytochrome P450 monooxygenases CalE, CalG and CalL, of which one might be responsible for the introduction of the extra hydroxyl group attached to the backbone of the decalin moiety, at position C9 in the backbone, that allows for attachment of the linear moiety. One tailoring enzyme activity that is expected to be involved in biosynthesis of calbistrin is an acyltransferase for connecting the two polyketide synthase products, and which could be performed by the cluster acyltransferase calJ. The enzyme responsible for the biosynthesis of the linear moiety, probably a second PKS, has not been identified yet. This is Cytochrome P450 monooxygenase calE from Penicillium decumbens.